Reading from the N-terminus, the 92-residue chain is Evasin P675 (92 aa).

The N-terminal stretch at 1-24 is a signal peptide; it reads MEVKTFAFLQIAVIIALGLHLAPA. 3 disulfide bridges follow: C44–C63, C48–C65, and C59–C76. N47 carries an N-linked (GlcNAc...) asparagine glycan. N70 carries an N-linked (GlcNAc...) asparagine glycan.

The protein localises to the secreted. Salivary chemokine-binding protein which binds to host chemokines CXCL1, CXCL2, CXCL3, CXCL4, CXCL5, CXCL6, CXCL10, CXCL11 and CXCL13. This is Evasin P675 from Ixodes ricinus (Common tick).